A 272-amino-acid chain; its full sequence is Phosphoglycolate phosphatase (272 aa).

Residue Asp19 is the Nucleophile of the active site. Mg(2+) contacts are provided by Asp19, Asp21, and Asp182.

This sequence belongs to the HAD-like hydrolase superfamily. CbbY/CbbZ/Gph/YieH family. Mg(2+) serves as cofactor.

The catalysed reaction is 2-phosphoglycolate + H2O = glycolate + phosphate. Its pathway is organic acid metabolism; glycolate biosynthesis; glycolate from 2-phosphoglycolate: step 1/1. Functionally, specifically catalyzes the dephosphorylation of 2-phosphoglycolate. Is involved in the dissimilation of the intracellular 2-phosphoglycolate formed during the DNA repair of 3'-phosphoglycolate ends, a major class of DNA lesions induced by oxidative stress. The sequence is that of Phosphoglycolate phosphatase from Pseudomonas syringae pv. tomato (strain ATCC BAA-871 / DC3000).